The sequence spans 250 residues: Ribosomal RNA small subunit methyltransferase J (250 aa).

S-adenosyl-L-methionine is bound by residues 101–102 (RD), 117–118 (ER), 153–154 (SS), and aspartate 171.

This sequence belongs to the methyltransferase superfamily. RsmJ family.

It is found in the cytoplasm. The catalysed reaction is guanosine(1516) in 16S rRNA + S-adenosyl-L-methionine = N(2)-methylguanosine(1516) in 16S rRNA + S-adenosyl-L-homocysteine + H(+). In terms of biological role, specifically methylates the guanosine in position 1516 of 16S rRNA. The sequence is that of Ribosomal RNA small subunit methyltransferase J from Escherichia coli (strain SMS-3-5 / SECEC).